The chain runs to 658 residues: Glycogen debranching enzyme (658 aa).

The active-site Nucleophile is the Asp335. The active-site Proton donor is Glu370. The span at 457–468 (NDANGEGNRDGT) shows a compositional bias: basic and acidic residues. Residues 457–478 (NDANGEGNRDGTDSNFSNNHGT) are disordered.

The protein belongs to the glycosyl hydrolase 13 family.

The catalysed reaction is Hydrolysis of (1-&gt;6)-alpha-D-glucosidic linkages to branches with degrees of polymerization of three or four glucose residues in limit dextrin.. The protein operates within glycan degradation; glycogen degradation. Functionally, removes maltotriose and maltotetraose chains that are attached by 1,6-alpha-linkage to the limit dextrin main chain, generating a debranched limit dextrin. The chain is Glycogen debranching enzyme from Pectobacterium carotovorum subsp. carotovorum (strain PC1).